Here is a 151-residue protein sequence, read N- to C-terminus: Ribosome maturation factor RimP (151 aa).

Belongs to the RimP family.

The protein localises to the cytoplasm. Required for maturation of 30S ribosomal subunits. The protein is Ribosome maturation factor RimP of Shewanella sediminis (strain HAW-EB3).